The primary structure comprises 267 residues: Putative F-box protein At5g38810 (267 aa).

The F-box domain maps to arginine 4–lysine 53.

This Arabidopsis thaliana (Mouse-ear cress) protein is Putative F-box protein At5g38810.